Here is a 162-residue protein sequence, read N- to C-terminus: GTP-dependent dephospho-CoA kinase (162 aa).

The GTP site is built by Asp-40, Val-41, Val-42, Asp-59, Lys-61, and Glu-111.

It belongs to the GTP-dependent DPCK family.

The catalysed reaction is 3'-dephospho-CoA + GTP = GDP + CoA + H(+). It functions in the pathway cofactor biosynthesis; coenzyme A biosynthesis. Functionally, catalyzes the GTP-dependent phosphorylation of the 3'-hydroxyl group of dephosphocoenzyme A to form coenzyme A (CoA). This chain is GTP-dependent dephospho-CoA kinase, found in Sulfurisphaera tokodaii (strain DSM 16993 / JCM 10545 / NBRC 100140 / 7) (Sulfolobus tokodaii).